The chain runs to 281 residues: MNVLQGLLLGLIQGLTEFLPISSTAHLTLAGKWMGVVSAEHPEHWTAFIAVIQLGTMAAVLIYFARDVLDISLTFLEENVFRRMRFKDQSHVSKLGWYVILGSLPVATFGLVFKKVIEGSLTKSLIVISASLIVFGILLGVSEVVARFSKSIKRISWLDALVVGFAQVMALVPGASRSGTTITAGLFMGMTRETAARFSFLLSIPAVMASGLLEFRESLDFMGSQDFLVLASATLMSAVSGYLTIAFLLRFLRRHSTNVFVVYRVVLGGALLWMVFRHGVV.

8 consecutive transmembrane segments (helical) span residues M1–I21, W45–A65, S93–F113, L125–V145, I155–A175, A195–F215, F227–F247, and S256–F276.

The protein belongs to the UppP family.

It is found in the cell inner membrane. It carries out the reaction di-trans,octa-cis-undecaprenyl diphosphate + H2O = di-trans,octa-cis-undecaprenyl phosphate + phosphate + H(+). Catalyzes the dephosphorylation of undecaprenyl diphosphate (UPP). Confers resistance to bacitracin. This Syntrophobacter fumaroxidans (strain DSM 10017 / MPOB) protein is Undecaprenyl-diphosphatase.